A 580-amino-acid chain; its full sequence is Putative adenine deaminase YerA (580 aa).

Serine 399 carries the phosphoserine modification.

It belongs to the metallo-dependent hydrolases superfamily. Adenine deaminase family.

It catalyses the reaction adenine + H2O + H(+) = hypoxanthine + NH4(+). In Bacillus subtilis (strain 168), this protein is Putative adenine deaminase YerA (yerA).